The primary structure comprises 686 residues: Putative xyloglucan glycosyltransferase 10 (686 aa).

2 consecutive transmembrane segments (helical) span residues 114–134 (LYAF…VELA) and 160–180 (AAYV…LFLV). Asp267 is a catalytic residue. Substrate-binding residues include Asp326 and Asp328. Asp420 is an active-site residue. 4 helical membrane-spanning segments follow: residues 498 to 518 (LILP…TMFI), 523 to 543 (LPDW…ILPA), 640 to 656 (ELAL…RSLL), and 661 to 681 (IHFY…LDLI).

It belongs to the glycosyltransferase 2 family. Plant cellulose synthase-like C subfamily.

Its subcellular location is the golgi apparatus membrane. Probable beta-1,4-glucan synthase rather involved in the synthesis of the xyloglucan backbone than cellulose. Seems to work simultaneously with xyloglucan 6-xylosyltransferase. Xyloglucan is a noncellulosic polysaccharides of plant cell wall and consists of a glucan backbone substituted by xylose, galactose and fucose. This Oryza sativa subsp. indica (Rice) protein is Putative xyloglucan glycosyltransferase 10 (CSLC10).